We begin with the raw amino-acid sequence, 592 residues long: E3 ubiquitin-protein ligase RNF180 (592 aa).

At 1–564 the chain is on the cytoplasmic side; sequence MKRSKELITK…DSRGWWFDMD (564 aa). Phosphoserine is present on Ser230. The RING-type zinc-finger motif lies at 432-474; that stretch reads CAVCLDVYFNPYMCYPCRHIFCEPCLRTLAKDNPSSTPCPLCR. A helical membrane pass occupies residues 565–585; that stretch reads MVIIYIYSVNWVIGFIVFCFL. The Extracellular portion of the chain corresponds to 586-592; that stretch reads CYFFFPF.

As to quaternary structure, interacts with ZIC2.

Its subcellular location is the endoplasmic reticulum membrane. It is found in the nucleus envelope. It catalyses the reaction S-ubiquitinyl-[E2 ubiquitin-conjugating enzyme]-L-cysteine + [acceptor protein]-L-lysine = [E2 ubiquitin-conjugating enzyme]-L-cysteine + N(6)-ubiquitinyl-[acceptor protein]-L-lysine.. It functions in the pathway protein modification; protein ubiquitination. Its function is as follows. E3 ubiquitin-protein ligase which promotes polyubiquitination and degradation by the proteasome pathway of ZIC2. The polypeptide is E3 ubiquitin-protein ligase RNF180 (RNF180) (Pongo abelii (Sumatran orangutan)).